Consider the following 510-residue polypeptide: NAD(P)H-quinone oxidoreductase subunit 2 A, chloroplastic (510 aa).

Transmembrane regions (helical) follow at residues 24-44 (LLLFDGSFIFPECILIFGLIL), 57-77 (IPWLYFISSTSLVMSITALLF), 99-119 (IFQFLILLCSTLCIPLSVEYI), 124-144 (MAITEFLLFVLTATLGGMFLC), 149-169 (LITIFVAPECFSLCSYLLSGY), 183-203 (YLLMGGASSSILVHGFSWLYG), 227-247 (PGISIALIFITVGIGFKLSPA), 295-315 (WHLLLEILAILSMILGNLIAI), 323-343 (MLAYSSIGQIGYVIIGIIVGD), 354-374 (YMLFYISMNLGTFACIVSFGL), 395-415 (ALSLALCLLSLGGLPPLAGFF), 418-438 (LHLFWCGWQAGLYFLVSIGLL), and 484-504 (MIVCVIASTIPGISMNPIIAI).

This sequence belongs to the complex I subunit 2 family. NDH is composed of at least 16 different subunits, 5 of which are encoded in the nucleus.

Its subcellular location is the plastid. It localises to the chloroplast thylakoid membrane. The catalysed reaction is a plastoquinone + NADH + (n+1) H(+)(in) = a plastoquinol + NAD(+) + n H(+)(out). It carries out the reaction a plastoquinone + NADPH + (n+1) H(+)(in) = a plastoquinol + NADP(+) + n H(+)(out). Its function is as follows. NDH shuttles electrons from NAD(P)H:plastoquinone, via FMN and iron-sulfur (Fe-S) centers, to quinones in the photosynthetic chain and possibly in a chloroplast respiratory chain. The immediate electron acceptor for the enzyme in this species is believed to be plastoquinone. Couples the redox reaction to proton translocation, and thus conserves the redox energy in a proton gradient. The protein is NAD(P)H-quinone oxidoreductase subunit 2 A, chloroplastic of Vitis vinifera (Grape).